We begin with the raw amino-acid sequence, 781 residues long: MEQLIPLVNQLQDLVYNTIGSDFLDLPSIVVVGSQSCGKSSVLENIVGKDFLPRGTGIVTRRPLILQLINLKRKTKNNHDEESTSDNNSEETSAAGETGSLEGIEEDSDEIEDYAEFLHIPDTKFTDMNKVRAEIENETLRVAGANKGINKLPINLKIYSTRVLNLTLIDLPGLTKIPVGDQPTDIEAQTRSLIMEYISRPNSIILAVSPANFDIVNSEGLKLARSVDPKGKRTIGVLTKLDLMDQGTNAMDILSGRVYPLKLGFVATVNRSQSDIVSHKSMRDALQSERSFFEHHPAYRTIKDRCGTPYLAKTLSNLLVSHIRERLPDIKARLSTLISQTQQQLNNYGDFKLSDQSQRGIILLQAMNRFANTFIASIDGNSSNIPTKELSGGARLYSIFNNVFTTALNSIDPLQNLSTVDIRTAILNSTGSRATLFLSEMAFDILVKPQLNLLAAPCHQCVELVYEELMKICHYSGDSDISHFPKLQTALVETVSDLLRENLTPTYSFVESLIAIQSAYINTNHPDFLGVQGAMAVVLSRKEQNRLMLSQENDEPISSALDTVKPDGIELYSSDPDTSVKSITNKATNEITTLKSDDSAKMQPLDVLASKRYNNAFSTETAERKTFLSYVFGANNATRKAMSIDKSSSYPLNDSLSGGDTNHKNNHPLKMTDLSNEVETMALEDMSEREEVEVDLIKELITSYFNLTRKIIIDQVPKVIMHLLVNASKDAIQNRLVSKLYREDFFDTLLIEDENVKSEREKCERLLSVYNQANKIISTVF.

Positions 23-328 constitute a Dynamin-type G domain; that stretch reads FLDLPSIVVV…LVSHIRERLP (306 aa). Residues 33–40 are G1 motif; sequence GSQSCGKS. 33 to 40 contacts GTP; the sequence is GSQSCGKS. Residues 59–61 are G2 motif; sequence VTR. The segment at 76-103 is disordered; the sequence is KNNHDEESTSDNNSEETSAAGETGSLEG. The tract at residues 170 to 173 is G3 motif; that stretch reads DLPG. GTP-binding positions include 170–174 and 239–242; these read DLPGL and TKLD. The segment at 239–242 is G4 motif; sequence TKLD. Residues 269–272 form a G5 motif region; sequence VNRS. The GED domain occupies 694 to 781; it reads VDLIKELITS…QANKIISTVF (88 aa).

The protein belongs to the TRAFAC class dynamin-like GTPase superfamily. Dynamin/Fzo/YdjA family.

The protein resides in the cytoplasm. It localises to the mitochondrion outer membrane. The catalysed reaction is GTP + H2O = GDP + phosphate + H(+). Microtubule-associated force-producing protein that mediates mitochondrial fission during interphasic growth and at cell division. Fission of mitochondria occurs in many cell types and constitutes an important step in mitochondria morphology, which is balanced between fusion and fission. With vps1, acts redundantly in peroxisome biogenesis, which is under cell cycle control. This Schizosaccharomyces pombe (strain 972 / ATCC 24843) (Fission yeast) protein is Dynamin-related protein dnm1 (dnm1).